The chain runs to 447 residues: GTPase Der (447 aa).

EngA-type G domains lie at Tyr2–Glu166 and Ile183–Trp358. Residues Gly8–Ser15, Asp55–Tyr59, Asn118–Asp121, Gly189–Ser196, Asp236–Leu240, and Asn301–Asp304 each bind GTP. The KH-like domain occupies Lys359–Glu443.

The protein belongs to the TRAFAC class TrmE-Era-EngA-EngB-Septin-like GTPase superfamily. EngA (Der) GTPase family. In terms of assembly, associates with the 50S ribosomal subunit.

GTPase that plays an essential role in the late steps of ribosome biogenesis. In Persephonella marina (strain DSM 14350 / EX-H1), this protein is GTPase Der.